The sequence spans 247 residues: 3-deoxy-manno-octulosonate cytidylyltransferase (247 aa).

Belongs to the KdsB family.

Its subcellular location is the cytoplasm. The enzyme catalyses 3-deoxy-alpha-D-manno-oct-2-ulosonate + CTP = CMP-3-deoxy-beta-D-manno-octulosonate + diphosphate. Its pathway is nucleotide-sugar biosynthesis; CMP-3-deoxy-D-manno-octulosonate biosynthesis; CMP-3-deoxy-D-manno-octulosonate from 3-deoxy-D-manno-octulosonate and CTP: step 1/1. It participates in bacterial outer membrane biogenesis; lipopolysaccharide biosynthesis. In terms of biological role, activates KDO (a required 8-carbon sugar) for incorporation into bacterial lipopolysaccharide in Gram-negative bacteria. The chain is 3-deoxy-manno-octulosonate cytidylyltransferase from Leptospira interrogans serogroup Icterohaemorrhagiae serovar Lai (strain 56601).